The following is a 153-amino-acid chain: 3-hydroxyacyl-[acyl-carrier-protein] dehydratase FabZ (153 aa).

Histidine 56 is a catalytic residue.

It belongs to the thioester dehydratase family. FabZ subfamily.

Its subcellular location is the cytoplasm. The enzyme catalyses a (3R)-hydroxyacyl-[ACP] = a (2E)-enoyl-[ACP] + H2O. In terms of biological role, involved in unsaturated fatty acids biosynthesis. Catalyzes the dehydration of short chain beta-hydroxyacyl-ACPs and long chain saturated and unsaturated beta-hydroxyacyl-ACPs. In Nitrosomonas europaea (strain ATCC 19718 / CIP 103999 / KCTC 2705 / NBRC 14298), this protein is 3-hydroxyacyl-[acyl-carrier-protein] dehydratase FabZ.